A 139-amino-acid polypeptide reads, in one-letter code: FAD synthase (139 aa).

ATP contacts are provided by residues 9 to 10 (TF), 14 to 17 (HPGH), and N92.

Belongs to the archaeal FAD synthase family. As to quaternary structure, homodimer. The cofactor is a divalent metal cation.

The enzyme catalyses FMN + ATP + H(+) = FAD + diphosphate. It functions in the pathway cofactor biosynthesis; FAD biosynthesis; FAD from FMN: step 1/1. Catalyzes the transfer of the AMP portion of ATP to flavin mononucleotide (FMN) to produce flavin adenine dinucleotide (FAD) coenzyme. The chain is FAD synthase from Methanocella paludicola (strain DSM 17711 / JCM 13418 / NBRC 101707 / SANAE).